The primary structure comprises 286 residues: Light-independent protochlorophyllide reductase iron-sulfur ATP-binding protein (286 aa).

ATP is bound by residues 10–15 (GIGKST) and K39. Mg(2+) is bound at residue S14. Residues C95 and C129 each coordinate [4Fe-4S] cluster. 180 to 181 (NR) provides a ligand contact to ATP.

This sequence belongs to the NifH/BchL/ChlL family. As to quaternary structure, homodimer. Protochlorophyllide reductase is composed of three subunits; ChlL, ChlN and ChlB. [4Fe-4S] cluster is required as a cofactor.

It catalyses the reaction chlorophyllide a + oxidized 2[4Fe-4S]-[ferredoxin] + 2 ADP + 2 phosphate = protochlorophyllide a + reduced 2[4Fe-4S]-[ferredoxin] + 2 ATP + 2 H2O. Its pathway is porphyrin-containing compound metabolism; chlorophyll biosynthesis (light-independent). Functionally, component of the dark-operative protochlorophyllide reductase (DPOR) that uses Mg-ATP and reduced ferredoxin to reduce ring D of protochlorophyllide (Pchlide) to form chlorophyllide a (Chlide). This reaction is light-independent. The L component serves as a unique electron donor to the NB-component of the complex, and binds Mg-ATP. This chain is Light-independent protochlorophyllide reductase iron-sulfur ATP-binding protein, found in Cyanothece sp. (strain PCC 7425 / ATCC 29141).